The following is a 244-amino-acid chain: L-xylulose reductase (244 aa).

Met1 carries the N-acetylmethionine modification. 11–39 (LVTGAGKGIGRSTVLALKAAGAQVVAVSR) provides a ligand contact to NADP(+). Omega-N-methylarginine is present on Arg21. Residue Ser136 participates in substrate binding. The Proton acceptor role is filled by Tyr149. Lys153 is an active-site residue.

Belongs to the short-chain dehydrogenases/reductases (SDR) family. As to quaternary structure, homotetramer. Highly expressed in kidney, liver and epididymis. Expressed at intermediate level in lung. Weakly or not expressed in brain, heart, spleen and testis.

Its subcellular location is the membrane. It is found in the apical cell membrane. The enzyme catalyses xylitol + NADP(+) = L-xylulose + NADPH + H(+). Functionally, catalyzes the NADPH-dependent reduction of several pentoses, tetroses, trioses, alpha-dicarbonyl compounds and L-xylulose. Participates in the uronate cycle of glucose metabolism. May play a role in the water absorption and cellular osmoregulation in the proximal renal tubules by producing xylitol, an osmolyte, thereby preventing osmolytic stress from occurring in the renal tubules. This Mus musculus (Mouse) protein is L-xylulose reductase (Dcxr).